We begin with the raw amino-acid sequence, 89 residues long: Small ribosomal subunit protein bS20 (89 aa).

The tract at residues Pro-68–Gln-89 is disordered. Basic and acidic residues predominate over residues Ser-76–Gln-89.

The protein belongs to the bacterial ribosomal protein bS20 family.

Its function is as follows. Binds directly to 16S ribosomal RNA. This is Small ribosomal subunit protein bS20 from Mycoplasmopsis agalactiae (strain NCTC 10123 / CIP 59.7 / PG2) (Mycoplasma agalactiae).